A 609-amino-acid chain; its full sequence is UvrABC system protein C (609 aa).

The 79-residue stretch at 15–93 (SSAGVYRMYD…IKQYMPKYNV (79 aa)) folds into the GIY-YIG domain. The 36-residue stretch at 202-237 (QQVVTNLVTKMEQAAEEFHYEQAAAYRDQITALRKV) folds into the UVR domain.

Belongs to the UvrC family. Interacts with UvrB in an incision complex.

It is found in the cytoplasm. In terms of biological role, the UvrABC repair system catalyzes the recognition and processing of DNA lesions. UvrC both incises the 5' and 3' sides of the lesion. The N-terminal half is responsible for the 3' incision and the C-terminal half is responsible for the 5' incision. In Shewanella denitrificans (strain OS217 / ATCC BAA-1090 / DSM 15013), this protein is UvrABC system protein C.